A 397-amino-acid polypeptide reads, in one-letter code: Phosphoglycerate transport regulatory protein PgtC (397 aa).

The signal sequence occupies residues Met1–Ala24. The chain crosses the membrane as a helical span at residues Thr102 to Arg117.

The protein localises to the cell membrane. Its function is as follows. Required for pgtP expression, it may act jointly with the PgtA/PgtB signaling proteins. The sequence is that of Phosphoglycerate transport regulatory protein PgtC (pgtC) from Salmonella typhi.